Consider the following 346-residue polypeptide: tRNA/tmRNA (uracil-C(5))-methyltransferase (346 aa).

Q168, Y197, N202, E218, and D278 together coordinate S-adenosyl-L-methionine. C303 (nucleophile) is an active-site residue. Catalysis depends on E337, which acts as the Proton acceptor.

Belongs to the class I-like SAM-binding methyltransferase superfamily. RNA M5U methyltransferase family. TrmA subfamily.

It catalyses the reaction uridine(54) in tRNA + S-adenosyl-L-methionine = 5-methyluridine(54) in tRNA + S-adenosyl-L-homocysteine + H(+). It carries out the reaction uridine(341) in tmRNA + S-adenosyl-L-methionine = 5-methyluridine(341) in tmRNA + S-adenosyl-L-homocysteine + H(+). Its function is as follows. Dual-specificity methyltransferase that catalyzes the formation of 5-methyluridine at position 54 (m5U54) in all tRNAs, and that of position 341 (m5U341) in tmRNA (transfer-mRNA). This chain is tRNA/tmRNA (uracil-C(5))-methyltransferase, found in Campylobacter lari (strain RM2100 / D67 / ATCC BAA-1060).